We begin with the raw amino-acid sequence, 254 residues long: 4-hydroxy-tetrahydrodipicolinate reductase (254 aa).

Residues 8-13 (GASGKM), 87-89 (GTT), and 111-114 (ATNM) each bind NAD(+). The Proton donor/acceptor role is filled by His143. His144 lines the (S)-2,3,4,5-tetrahydrodipicolinate pocket. The active-site Proton donor is Lys147. 153–154 (GT) contributes to the (S)-2,3,4,5-tetrahydrodipicolinate binding site.

This sequence belongs to the DapB family.

The protein resides in the cytoplasm. It catalyses the reaction (S)-2,3,4,5-tetrahydrodipicolinate + NAD(+) + H2O = (2S,4S)-4-hydroxy-2,3,4,5-tetrahydrodipicolinate + NADH + H(+). It carries out the reaction (S)-2,3,4,5-tetrahydrodipicolinate + NADP(+) + H2O = (2S,4S)-4-hydroxy-2,3,4,5-tetrahydrodipicolinate + NADPH + H(+). The protein operates within amino-acid biosynthesis; L-lysine biosynthesis via DAP pathway; (S)-tetrahydrodipicolinate from L-aspartate: step 4/4. In terms of biological role, catalyzes the conversion of 4-hydroxy-tetrahydrodipicolinate (HTPA) to tetrahydrodipicolinate. The protein is 4-hydroxy-tetrahydrodipicolinate reductase of Campylobacter curvus (strain 525.92).